Here is a 223-residue protein sequence, read N- to C-terminus: Ribose-5-phosphate isomerase A (223 aa).

Residues Thr-29 to Thr-32, Asp-82 to Asp-85, and Lys-95 to Gly-98 each bind substrate. Glu-104 serves as the catalytic Proton acceptor. Substrate is bound at residue Lys-122.

The protein belongs to the ribose 5-phosphate isomerase family. Homodimer.

The enzyme catalyses aldehydo-D-ribose 5-phosphate = D-ribulose 5-phosphate. The protein operates within carbohydrate degradation; pentose phosphate pathway; D-ribose 5-phosphate from D-ribulose 5-phosphate (non-oxidative stage): step 1/1. Functionally, catalyzes the reversible conversion of ribose-5-phosphate to ribulose 5-phosphate. The polypeptide is Ribose-5-phosphate isomerase A (Neisseria gonorrhoeae (strain ATCC 700825 / FA 1090)).